A 60-amino-acid polypeptide reads, in one-letter code: UPF0434 protein NMCC_0628 (60 aa).

Belongs to the UPF0434 family.

The sequence is that of UPF0434 protein NMCC_0628 from Neisseria meningitidis serogroup C (strain 053442).